The primary structure comprises 444 residues: Methylenetetrahydrofolate--tRNA-(uracil-5-)-methyltransferase TrmFO (444 aa).

Position 10–15 (10–15 (GAGLAG)) interacts with FAD.

This sequence belongs to the MnmG family. TrmFO subfamily. It depends on FAD as a cofactor.

The protein resides in the cytoplasm. It carries out the reaction uridine(54) in tRNA + (6R)-5,10-methylene-5,6,7,8-tetrahydrofolate + NADH + H(+) = 5-methyluridine(54) in tRNA + (6S)-5,6,7,8-tetrahydrofolate + NAD(+). The enzyme catalyses uridine(54) in tRNA + (6R)-5,10-methylene-5,6,7,8-tetrahydrofolate + NADPH + H(+) = 5-methyluridine(54) in tRNA + (6S)-5,6,7,8-tetrahydrofolate + NADP(+). In terms of biological role, catalyzes the folate-dependent formation of 5-methyl-uridine at position 54 (M-5-U54) in all tRNAs. This Streptococcus suis (strain 98HAH33) protein is Methylenetetrahydrofolate--tRNA-(uracil-5-)-methyltransferase TrmFO.